A 199-amino-acid polypeptide reads, in one-letter code: Fe/S biogenesis protein NfuA (199 aa).

Cys151 and Cys154 together coordinate [4Fe-4S] cluster.

This sequence belongs to the NfuA family. As to quaternary structure, homodimer. It depends on [4Fe-4S] cluster as a cofactor.

Involved in iron-sulfur cluster biogenesis. Binds a 4Fe-4S cluster, can transfer this cluster to apoproteins, and thereby intervenes in the maturation of Fe/S proteins. Could also act as a scaffold/chaperone for damaged Fe/S proteins. The polypeptide is Fe/S biogenesis protein NfuA (Stenotrophomonas maltophilia (strain K279a)).